Reading from the N-terminus, the 90-residue chain is Small ribosomal subunit protein bS20 (90 aa).

This sequence belongs to the bacterial ribosomal protein bS20 family.

Its function is as follows. Binds directly to 16S ribosomal RNA. The protein is Small ribosomal subunit protein bS20 of Desulfitobacterium hafniense (strain DSM 10664 / DCB-2).